A 478-amino-acid chain; its full sequence is PRAME family member 15 (478 aa).

An LRR 1; degenerate repeat occupies 99–126 (RWKLQVLDLQDVCENFWMVWSEAMAHGC). An LRR 2; degenerate repeat occupies 181-205 (HLCCKKLKILGMPFRNIRSILKMVN). An LRR 3; degenerate repeat occupies 206-232 (LDCIQEVEVNCKWVLPILTQFTPYLGH). An LRR 4; degenerate repeat occupies 233-268 (MRNLQKLVLSHMDVSRYVSPEQKKEIVTQFTTQFLK). 5 LRR repeats span residues 269-294 (LRCL…LSCL), 295-326 (KTSL…SQLK), 327-347 (TLDL…QILL), 351-378 (AATL…ALSR), and 379-403 (CFEL…LLSH).

It belongs to the PRAME family.

The sequence is that of PRAME family member 15 from Homo sapiens (Human).